The following is a 1410-amino-acid chain: Endoribonuclease Dicer homolog 2a (1410 aa).

The span at 1 to 15 (MGGPLTAAGGRGDGG) shows a compositional bias: gly residues. The interval 1–30 (MGGPLTAAGGRGDGGAKAVEPLRPPPPPDP) is disordered. Positions 41-222 (ALERAVRGNT…HNYSKQISEI (182 aa)) constitute a Helicase ATP-binding domain. An ATP-binding site is contributed by 54–61 (LETGSGKT). The DECH box motif lies at 163-166 (DECH). The region spanning 388 to 561 (TLLQYRHMQD…DTYYRVESTR (174 aa)) is the Helicase C-terminal domain. The Dicer dsRNA-binding fold domain occupies 569 to 655 (SVPLIHFFCS…LPELDVPCDE (87 aa)). A PAZ domain is found at 827–942 (KDIDLLQTKD…LPPELCRIIM (116 aa)). RNase III domains are found at residues 969–1124 (SVKL…STAG) and 1161–1308 (VRSL…LDSK). Residues Glu-1200, Asp-1294, and Glu-1297 each coordinate Mg(2+). Residues 1334–1400 (DPVKGLQEFC…SKAVLKDLIA (67 aa)) form the DRBM domain.

Belongs to the helicase family. Dicer subfamily. In terms of assembly, may interact with ARGONAUTE1 or PINHEAD through their common PAZ domains. Requires Mg(2+) as cofactor. It depends on Mn(2+) as a cofactor.

The protein localises to the nucleus. In terms of biological role, probably involved in the RNA silencing pathway. May cleave double-stranded RNA to produce short 21-24 nucleotides (nt) RNAs which target the selective destruction of complementary RNAs. This chain is Endoribonuclease Dicer homolog 2a (DCL2A), found in Oryza sativa subsp. japonica (Rice).